Reading from the N-terminus, the 477-residue chain is Nitrogenase molybdenum-iron protein alpha chain (477 aa).

[8Fe-7S] cluster contacts are provided by Cys-49, Cys-75, and Cys-149. 2 residues coordinate [7Fe-Mo-9S-C-homocitryl] cluster: Cys-267 and His-433.

This sequence belongs to the NifD/NifK/NifE/NifN family. As to quaternary structure, tetramer of two alpha and two beta chains. Forms complex with the iron protein (nitrogenase component 2). It depends on [8Fe-7S] cluster as a cofactor. The cofactor is [7Fe-Mo-9S-C-homocitryl] cluster.

It catalyses the reaction N2 + 8 reduced [2Fe-2S]-[ferredoxin] + 16 ATP + 16 H2O = H2 + 8 oxidized [2Fe-2S]-[ferredoxin] + 2 NH4(+) + 16 ADP + 16 phosphate + 6 H(+). This molybdenum-iron protein is part of the nitrogenase complex that catalyzes the key enzymatic reactions in nitrogen fixation. In Methanococcus maripaludis (Methanococcus deltae), this protein is Nitrogenase molybdenum-iron protein alpha chain (nifD).